Consider the following 287-residue polypeptide: uncharacterized protein (287 aa).

Transmembrane regions (helical) follow at residues 27 to 47, 66 to 86, 97 to 117, 135 to 155, 171 to 191, 205 to 225, and 254 to 274; these read LTFS…FGVQ, LGTI…VTAF, WFWG…GVLL, IVFA…LSAL, IFIW…VLNF, LFPG…VYFV, and SALF…YFIL.

It localises to the cell membrane. This is an uncharacterized protein from Mycoplasma pneumoniae (strain ATCC 29342 / M129 / Subtype 1) (Mycoplasmoides pneumoniae).